The sequence spans 498 residues: Protein flp (498 aa).

Transmembrane regions (helical) follow at residues 6–26, 389–409, 433–453, and 471–491; these read LYFL…IYIT, FNIV…FSAY, LSLC…YLIL, and LALI…LLFL.

The protein resides in the cell membrane. Its precise function is unknown. Has no penicillin-binding activity and is not involved in methicillin resistance. In Staphylococcus aureus (strain COL), this protein is Protein flp (flp).